The sequence spans 197 residues: MPKKIDTKKIEECIREIIVALGDDPNREGLLDTPKRVSKMYEEVFQGMTLSNREIAEAFGTTFENEDYDSETHNNMVVVKDIPIHSYCEHHLALMYNMKVTVVYIPKDKIIGLSKISRIADMVGRRLQLQERIGTDIAEIVSMVTKSSDVGVLITGEHGCMTSRGIKKPGTLTTTTTFTGKFQTNDLLRQEALLIMK.

Cys88, His91, and Cys160 together coordinate Zn(2+).

It belongs to the GTP cyclohydrolase I family. As to quaternary structure, homomer.

It catalyses the reaction GTP + H2O = 7,8-dihydroneopterin 3'-triphosphate + formate + H(+). It functions in the pathway cofactor biosynthesis; 7,8-dihydroneopterin triphosphate biosynthesis; 7,8-dihydroneopterin triphosphate from GTP: step 1/1. In Clostridium beijerinckii (strain ATCC 51743 / NCIMB 8052) (Clostridium acetobutylicum), this protein is GTP cyclohydrolase 1.